Here is a 428-residue protein sequence, read N- to C-terminus: Serine--tRNA ligase (428 aa).

235–237 (TAE) contributes to the L-serine binding site. 266-268 (RSE) contacts ATP. Glu-289 provides a ligand contact to L-serine. ATP is bound at residue 353 to 356 (EISS). Ser-389 is an L-serine binding site.

Belongs to the class-II aminoacyl-tRNA synthetase family. Type-1 seryl-tRNA synthetase subfamily. In terms of assembly, homodimer. The tRNA molecule binds across the dimer.

It localises to the cytoplasm. It carries out the reaction tRNA(Ser) + L-serine + ATP = L-seryl-tRNA(Ser) + AMP + diphosphate + H(+). It catalyses the reaction tRNA(Sec) + L-serine + ATP = L-seryl-tRNA(Sec) + AMP + diphosphate + H(+). It participates in aminoacyl-tRNA biosynthesis; selenocysteinyl-tRNA(Sec) biosynthesis; L-seryl-tRNA(Sec) from L-serine and tRNA(Sec): step 1/1. Catalyzes the attachment of serine to tRNA(Ser). Is also able to aminoacylate tRNA(Sec) with serine, to form the misacylated tRNA L-seryl-tRNA(Sec), which will be further converted into selenocysteinyl-tRNA(Sec). This chain is Serine--tRNA ligase, found in Shewanella halifaxensis (strain HAW-EB4).